A 428-amino-acid chain; its full sequence is Enolase (428 aa).

Gln-163 is a binding site for (2R)-2-phosphoglycerate. Glu-205 functions as the Proton donor in the catalytic mechanism. 3 residues coordinate Mg(2+): Asp-242, Glu-285, and Asp-312. Residues Lys-337, Arg-366, Ser-367, and Lys-388 each contribute to the (2R)-2-phosphoglycerate site. The active-site Proton acceptor is Lys-337.

It belongs to the enolase family. Requires Mg(2+) as cofactor.

The protein resides in the cytoplasm. It is found in the secreted. The protein localises to the cell surface. It carries out the reaction (2R)-2-phosphoglycerate = phosphoenolpyruvate + H2O. The protein operates within carbohydrate degradation; glycolysis; pyruvate from D-glyceraldehyde 3-phosphate: step 4/5. In terms of biological role, catalyzes the reversible conversion of 2-phosphoglycerate (2-PG) into phosphoenolpyruvate (PEP). It is essential for the degradation of carbohydrates via glycolysis. This is Enolase from Moorella thermoacetica (strain ATCC 39073 / JCM 9320).